A 781-amino-acid polypeptide reads, in one-letter code: Protein translocase subunit SecA 2 (781 aa).

Residues Gln-85, 103-107, and Asp-491 each bind ATP; that span reads GEGKT.

Belongs to the SecA family. Monomer and homodimer. Part of the essential Sec protein translocation apparatus which comprises SecA, SecYEG and auxiliary proteins SecDF. Other proteins may also be involved.

It localises to the cell membrane. It is found in the cytoplasm. It catalyses the reaction ATP + H2O + cellular proteinSide 1 = ADP + phosphate + cellular proteinSide 2.. Its function is as follows. Part of the Sec protein translocase complex. Interacts with the SecYEG preprotein conducting channel. Has a central role in coupling the hydrolysis of ATP to the transfer of proteins into and across the cell membrane, serving as an ATP-driven molecular motor driving the stepwise translocation of polypeptide chains across the membrane. This is Protein translocase subunit SecA 2 from Clostridioides difficile (strain 630) (Peptoclostridium difficile).